Reading from the N-terminus, the 325-residue chain is RNA ligase 1 (325 aa).

Mg(2+) serves as cofactor. The cofactor is Mn(2+). AMPylates itself (auto-AMPylation).

It carries out the reaction ATP + (ribonucleotide)n-3'-hydroxyl + 5'-phospho-(ribonucleotide)m = (ribonucleotide)n+m + AMP + diphosphate.. In terms of biological role, functions as an RNA ligase, in vitro. The ligation reaction entails three nucleotidyl transfer steps. In the first step, the RNA ligase reacts with ATP in the absence of nucleic acid to form a covalent ligase-AMP intermediate and release pyrophosphate. In step 2, the ligase-AMP binds to the nucleic acid and transfers the adenylate to the 5'-PO4 terminus to form an adenylylated intermediate. In step 3, the RNA ligase directs the attack of the 3'-OH on the 5'-phosphoanhydride linkage, resulting in a repaired 3'-5' phosphodiester and release of AMP. Exhibits selectivity for single-stranded RNA substrates and may not have nick-sealing activity on double-stranded DNA-RNA hybrids. May play a role in maintaining RNA integrity under stress conditions, for example in response to reactive oxygen species (ROS). The chain is RNA ligase 1 from Rattus norvegicus (Rat).